Reading from the N-terminus, the 156-residue chain is Acyl carrier protein, mitochondrial (156 aa).

Residues 1 to 68 constitute a mitochondrion transit peptide; sequence MAVRVLCACV…GRVTQLCRQY (68 aa). A Carrier domain is found at 77–152; it reads EGIKDRVLYV…EIVDYIADKK (76 aa). Lys-88 is subject to N6-acetyllysine. O-(pantetheine 4'-phosphoryl)serine is present on Ser-112.

As to quaternary structure, mammalian complex I is composed of 45 different subunits. Interacts with ETFRF1. Identified in a complex composed of MALSU1, MIEF1 upstream open reading frame protein and NDUFAB1; within the trimeric complex MIEF1 upstream open reading frame protein functions as a bridging scaffold that interacts with MALSU1 on one side, and with NDUFAB1 on the other side. The complex interacts with the mitochondrial large ribosomal subunit. Interacts with alpha-1-microglobulin chain; this interaction is required for the maintenance of mitochondrial redox homeostasis. Component of the mitochondrial core iron-sulfur cluster (ISC) complex composed of NFS1, LYRM4, NDUFAB1, ISCU, FXN, and FDX2; this complex is a heterohexamer containing two copies of each monomer. Component of the cyteine desulfurase complex composed of NFS1, LYRM4 and NDUFAB1; this complex contributes to the stability and cysteine desulfurase activity of NFS1. Phosphopantetheinylation at Ser-112 is essential for interactions with LYR motif-containing proteins.

It localises to the mitochondrion. Functionally, carrier of the growing fatty acid chain in fatty acid biosynthesis. Accessory and non-catalytic subunit of the mitochondrial membrane respiratory chain NADH dehydrogenase (Complex I), which functions in the transfer of electrons from NADH to the respiratory chain. Accessory protein, of the core iron-sulfur cluster (ISC) assembly complex, that regulates, in association with LYRM4, the stability and the cysteine desulfurase activity of NFS1 and participates in the [2Fe-2S] clusters assembly on the scaffolding protein ISCU. The core iron-sulfur cluster (ISC) assembly complex is involved in the de novo synthesis of a [2Fe-2S] cluster, the first step of the mitochondrial iron-sulfur protein biogenesis. This process is initiated by the cysteine desulfurase complex (NFS1:LYRM4:NDUFAB1) that produces persulfide which is delivered on the scaffold protein ISCU in a FXN-dependent manner. Then this complex is stabilized by FDX2 which provides reducing equivalents to accomplish the [2Fe-2S] cluster assembly. Finally, the [2Fe-2S] cluster is transferred from ISCU to chaperone proteins, including HSCB, HSPA9 and GLRX5. This is Acyl carrier protein, mitochondrial from Bos taurus (Bovine).